The primary structure comprises 750 residues: MTIESIRVKNLLSFDDVILRDFRDINCIIGRNNVGKSNLLKVIRYFYAKLENKKVIPLDFHTNYNAVGEITFTFDTTRIKKIVTSRKNNGRFHKHIYNTLFKSSSVKLNFEELIARKNSTNKSFFSLTLTICKDDSVMWSVDDPKVRSLLATLYPFLYIETRHIDLYDWNPIWKLISNLNSFNFDDVDHDELVNFLDEKISSRKGDYKKYIDRVVSVIDTKPYTYKEKVINYIKVAIKGDSFVNAGEELFTQSDGTNSNKFLETLLHLLITLTRTEFISPIVYIDEPEVGLHPKLAESFVSNLNKIYSKFKKTSELSGPGRYKTPYPNIFYSTHSPSILKQTIKLFGKDQQVLHFSKKKDGSTRVNKINSTYSDERFLNIFSDNEARLFFSEYIVFVEGATELELFRNLSLLNLYPAFSLADIYDANEVILANINPGYSKASIPFVIIKDIDTLIDYSIKTEKFSLRPLFEKMIKELTKEFDYYDTGFGRVRKEIDLFSDIQSSTKKHMDSGLFFKRFSLHNLSSRINKVSRKLNRYFMTTTIEGALINEQSLPYFFNWIGDVILTQMTINNPNPDKFIEAMRRRYNIKSQVVPLFKSVFCIGLNHPVYSSAVDKQALRIKLSFLNYLKRKVYSDFNNEKEIVLALRLAFGGKTETQYTLDKLRKDGEAELFREKIKNYKNNELFFLEPQMTKTSGWVTTFLNYTIEKITSEESDDDRIRQKLSFIFPEIISIIEQASSSIEAEESSLTG.

Residues 1-173 (MTIESIRVKN…IDLYDWNPIW (173 aa)) are ATPase domain N-terminus. 33–37 (NVGKS) provides a ligand contact to ATP. The interval 174-260 (KLISNLNSFN…TQSDGTNSNK (87 aa)) is dimerization domain. The segment at 261-390 (FLETLLHLLI…FSDNEARLFF (130 aa)) is ATPase domain C-terminus. The toprim domain stretch occupies residues 391-704 (SEYIVFVEGA…SGWVTTFLNY (314 aa)). Glutamate 398, glutamate 402, aspartate 450, aspartate 452, serine 623, and glutamate 641 together coordinate a divalent metal cation.

The protein belongs to the class 1 OLD nuclease family. In terms of assembly, homodimer. The cofactor is a divalent metal cation.

Its function is as follows. Probable nuclease member of antiviral defense system retron Eco8, composed of an reverse transcriptase (RT), this nuclease and a non-coding RNA (ncRNA) encoded between them. Expression of retron Eco8 confers protection against bacteriophages T4, T6, T7 and SECphi4, SECphi6 and SECphi18. At multiplicity of infection (MOI) of 0.02 cultures slow growth when infected with SECphi4 but do not collapse, at MOI 2 cultures collapse. When the retron is cloned in another E.coli strain synthesizes msDNA (a branched RNA linked by a 2',5'-phosphodiester bond to a single-stranded DNA). The retron transcript serves as primer and template to the reaction, and codes for the RT. The protein is Retron Eco8 OLD nuclease of Escherichia coli.